We begin with the raw amino-acid sequence, 330 residues long: Glycerol-3-phosphate dehydrogenase [NAD(P)+] (330 aa).

S11, F12, R32, and K106 together coordinate NADPH. K106, G133, and S135 together coordinate sn-glycerol 3-phosphate. NADPH is bound at residue A137. K188, D241, S251, R252, and N253 together coordinate sn-glycerol 3-phosphate. K188 functions as the Proton acceptor in the catalytic mechanism. R252 is an NADPH binding site. Residues V276 and E278 each coordinate NADPH.

It belongs to the NAD-dependent glycerol-3-phosphate dehydrogenase family.

It localises to the cytoplasm. It catalyses the reaction sn-glycerol 3-phosphate + NAD(+) = dihydroxyacetone phosphate + NADH + H(+). The enzyme catalyses sn-glycerol 3-phosphate + NADP(+) = dihydroxyacetone phosphate + NADPH + H(+). Its pathway is membrane lipid metabolism; glycerophospholipid metabolism. Catalyzes the reduction of the glycolytic intermediate dihydroxyacetone phosphate (DHAP) to sn-glycerol 3-phosphate (G3P), the key precursor for phospholipid synthesis. This Clostridium botulinum (strain Eklund 17B / Type B) protein is Glycerol-3-phosphate dehydrogenase [NAD(P)+].